The following is a 541-amino-acid chain: Arginine-containing cyclodipeptide synthase avaA (541 aa).

The short motif at 428 to 432 (DDIAE) is the Conserved DDXXE motif element.

This sequence belongs to the arginine-containing cyclodipeptide synthase family.

It catalyses the reaction L-tryptophyl-tRNA(Trp) + L-arginyl-tRNA(Arg) = cyclo(L-arginyl-L-tryptophyl) + tRNA(Trp) + tRNA(Arg) + H(+). Its pathway is secondary metabolite biosynthesis. In terms of biological role, arginine-containing cyclodipeptide synthase; part of the cluster that mediates the biosynthesis of a highly modified cyclo-arginine-tryptophan dipeptide (cRW). Within the pathway, avaA acts as the scaffold-generating enzyme and is responsible for formation of the cyclo-Arg-Trp diketopiperazine (cRW) from L-arginyl-tRNA(Arg) + L-tryptophanyl-tRNA(Trp). AvaB then acts as a multifunctional flavoenzyme that is responsible for generating the cyclo-Arg-formylkynurenine DKP, which can be deformylated by avaC. AvaB then catalyzes an additional N-oxidation followed by cyclization and dehydration. The next step is an N-acetylation of the guanidine group catalyzed by the arginine N-acetyltransferase AvaD. The role of the additional enzymes identified within the ava cluster still have to be determined. The chain is Arginine-containing cyclodipeptide synthase avaA from Aspergillus versicolor.